A 1384-amino-acid chain; its full sequence is DNA-directed RNA polymerase subunit beta' (1384 aa).

C81, C83, C96, and C99 together coordinate Zn(2+). Mg(2+) is bound by residues D472, D474, and D476.

Belongs to the RNA polymerase beta' chain family. In terms of assembly, the RNAP catalytic core consists of 2 alpha, 1 beta, 1 beta' and 1 omega subunit. When a sigma factor is associated with the core the holoenzyme is formed, which can initiate transcription. Requires Mg(2+) as cofactor. Zn(2+) serves as cofactor.

It catalyses the reaction RNA(n) + a ribonucleoside 5'-triphosphate = RNA(n+1) + diphosphate. In terms of biological role, DNA-dependent RNA polymerase catalyzes the transcription of DNA into RNA using the four ribonucleoside triphosphates as substrates. The chain is DNA-directed RNA polymerase subunit beta' from Opitutus terrae (strain DSM 11246 / JCM 15787 / PB90-1).